We begin with the raw amino-acid sequence, 525 residues long: Vanin-like protein 2 (525 aa).

An N-terminal signal peptide occupies residues Met-1–Leu-27. Asn-20 and Asn-61 each carry an N-linked (GlcNAc...) asparagine glycan. Residues Tyr-33 to Lys-303 enclose the CN hydrolase domain. Glu-72 functions as the Proton acceptor in the catalytic mechanism. Asn-99, Asn-116, and Asn-124 each carry an N-linked (GlcNAc...) asparagine glycan. The Proton donor role is filled by Lys-167. The N-linked (GlcNAc...) asparagine glycan is linked to Asn-176. The active-site Nucleophile is Cys-199. Asn-333, Asn-348, and Asn-375 each carry an N-linked (GlcNAc...) asparagine glycan.

Belongs to the carbon-nitrogen hydrolase superfamily. BTD/VNN family. As to expression, expressed in third instar larvae.

The protein resides in the secreted. This is Vanin-like protein 2 from Drosophila melanogaster (Fruit fly).